Consider the following 355-residue polypeptide: Septin-2B (355 aa).

In terms of domain architecture, Septin-type G spans 33–305 (KGFEFTLMVV…ENFRSERLKK (273 aa)). The G1 motif stretch occupies residues 43–50 (GESGLGKS). Residues 43-50 (GESGLGKS), threonine 77, glycine 103, 182-190 (KADTLTLRE), glycine 240, and arginine 255 contribute to the GTP site. The G3 motif stretch occupies residues 100-103 (DTPG). Residues 181 to 184 (AKAD) form a G4 motif region. The important for dimerization stretch occupies residues 259 to 269 (WGVVEVENPEH).

It belongs to the TRAFAC class TrmE-Era-EngA-EngB-Septin-like GTPase superfamily. Septin GTPase family. Septins polymerize into heterooligomeric protein complexes that form filaments, and associate with cellular membranes, actin filaments and microtubules. GTPase activity is required for filament formation. Can form heterooligomers with other family members and form filaments. Interacts with wdpcp.

It is found in the cytoplasm. Its subcellular location is the cytoskeleton. It localises to the spindle. The protein localises to the cleavage furrow. The protein resides in the midbody. It is found in the cell cortex. Its subcellular location is the cell projection. It localises to the cilium membrane. Functionally, filament-forming cytoskeletal GTPase. Required for normal organization of the actin cytoskeleton. Plays a role in the biogenesis of polarized columnar-shaped epithelium. Required for the progression through mitosis through regulation of chromosome congression. During anaphase, may be required for chromosome segregation and spindle elongation. Plays a role in ciliogenesis and collective cell movements including convergent extension during gastrulation. In cilia, required for the integrity of the diffusion barrier at the base of the primary cilium that prevents diffusion of transmembrane proteins between the cilia and plasma membranes. Controls cell shape and not polarization of cells during convergent extension. The chain is Septin-2B (sept2-B) from Xenopus tropicalis (Western clawed frog).